A 186-amino-acid polypeptide reads, in one-letter code: MGRYTLALLPLIVFGGIAHGAKMLYDQDFHGKNIAEIPSALSHQGADAEPAAARRATLPALTDAAIKGKLTLVNVFASWCLPCRDEHPVLKELAKDGRLNIVAINYKDQSDNALRFLGELGNPYQAIGIDPNGKAAIDWGVYGIPESYLVGADGTILYKRVGPSTNISLKEGLVPAMEKALGKPVS.

Residues 1–20 form the signal peptide; that stretch reads MGRYTLALLPLIVFGGIAHG. One can recognise a Thioredoxin domain in the interval 47-182; it reads DAEPAAARRA…LVPAMEKALG (136 aa). C80 and C83 are oxidised to a cystine.

It belongs to the thioredoxin family. DsbE subfamily.

It localises to the periplasm. In terms of biological role, required for disulfide bond formation in some periplasmic proteins. Also acts as a disulfide oxidoreductase in cytochromes c biogenesis. The cysteines of apocytochromes c must be in the reduced state for covalent linkage between the two moieties to occur. The sequence is that of Thiol:disulfide interchange protein CycY (cycY) from Rhizobium leguminosarum bv. viciae.